The primary structure comprises 214 residues: Large ribosomal subunit protein bL25 (214 aa).

The interval 178–214 (VEPEEEELPETDEEGEGAEGEAAEAAEGESAEGESEE) is disordered. Residues 179-214 (EPEEEELPETDEEGEGAEGEAAEAAEGESAEGESEE) are compositionally biased toward acidic residues.

This sequence belongs to the bacterial ribosomal protein bL25 family. CTC subfamily. As to quaternary structure, part of the 50S ribosomal subunit; part of the 5S rRNA/L5/L18/L25 subcomplex. Contacts the 5S rRNA. Binds to the 5S rRNA independently of L5 and L18.

This is one of the proteins that binds to the 5S RNA in the ribosome where it forms part of the central protuberance. The polypeptide is Large ribosomal subunit protein bL25 (Corynebacterium jeikeium (strain K411)).